The chain runs to 231 residues: Aquaporin Z (231 aa).

Transmembrane regions (helical) follow at residues 9–29 and 34–54; these read CFGT…AAGF and IGFA…AFAV. An NPA 1 motif is present at residues 63 to 65; that stretch reads NPA. 3 helical membrane passes run 82-102, 129-149, and 156-176; these read VGYV…LYLI, YSML…LLVI, and FAPA…IHLI. The NPA 2 signature appears at 186-188; the sequence is NPA. The chain crosses the membrane as a helical span at residues 202–222; sequence LEQLWFFWVVPIVGGIIGGLI.

The protein belongs to the MIP/aquaporin (TC 1.A.8) family. In terms of assembly, homotetramer.

Its subcellular location is the cell inner membrane. The enzyme catalyses H2O(in) = H2O(out). In terms of biological role, channel that permits osmotically driven movement of water in both directions. It is involved in the osmoregulation and in the maintenance of cell turgor during volume expansion in rapidly growing cells. It mediates rapid entry or exit of water in response to abrupt changes in osmolarity. The chain is Aquaporin Z from Escherichia coli O157:H7.